Here is a 443-residue protein sequence, read N- to C-terminus: Protoheme IX farnesyltransferase, mitochondrial (443 aa).

Transmembrane regions (helical) follow at residues 174 to 194 (AAGFALAPGPFDWPCFLLTSV), 235 to 255 (LAVSFATCCAVPGVAILTLGV), 257 to 277 (PLTGALGLFNIFLYTCCYTPL), 280 to 300 (ISIANTWVGAVVGAIPPVMGW), 309 to 329 (AGAFLLGGILYSWQFPHFNAL), 364 to 384 (LLVLSAAAPVLDITTWTFPIM), and 411 to 431 (LFFCSLWHLPLLLLLMLTCKR).

Belongs to the UbiA prenyltransferase family.

It is found in the mitochondrion membrane. The catalysed reaction is heme b + (2E,6E)-farnesyl diphosphate + H2O = Fe(II)-heme o + diphosphate. Functionally, converts protoheme IX and farnesyl diphosphate to heme O. This chain is Protoheme IX farnesyltransferase, mitochondrial (COX10), found in Pongo abelii (Sumatran orangutan).